The primary structure comprises 161 residues: Transcriptional regulator MraZ (161 aa).

2 SpoVT-AbrB domains span residues Lys-7–Val-69 and Leu-98–Arg-141.

It belongs to the MraZ family. As to quaternary structure, forms oligomers.

The protein localises to the cytoplasm. The protein resides in the nucleoid. The chain is Transcriptional regulator MraZ from Chlorobium limicola (strain DSM 245 / NBRC 103803 / 6330).